A 1390-amino-acid polypeptide reads, in one-letter code: MEAKNLTARQVLGFQKTIGFDEVRISIASPETIESWSKGEVRNPETINYRTFKPEKGGLFCERIFGPTKDWECACGKYKRIKYKGVICDRCGVEVTLSRVRRERMGHIKLAVPVSHIWFLKCMPSRLGLIMDMTAKDLERVIYYEDYLVVDPGKTPLRFKQLLSEQEYRDALAQYGEEAFVAKMGAEAVRDILKQIDLQALANDLTAAMEGTRSKQLKKKLAKRLKLVQGLINSETRPEWMILEVLPVIPPDLRPLVPLEGGRFATSDLNDLYRRVINRNNRLKNLLQLKTPDVIIRNEKRMLQEAVDALLDNGRHGRAVTGAGNRPLKSLSDMLQGKTGRFRMNLLGKRVDYSGRSVIVIGPELKLHQCGLPKKMALVLFEPFMIRRLRELGHVHTVRTAKKMIEKQDPLVWDVLEQVTAGHLVLLNRAPTLHRLSIQAFEPILIEGDAIRIHPLVCTAYNADFDGDQMAVHVPLSIEAQLEARLLMLAPLNIFSPSSGKPITTPTQDITLGCYYLTQPPLKIKVQEQKRKPLFSDAQEVIFAYNDGLLQMHDLILLKNPDYGRSTVFGDKNKKVIETTPGRVIFNQIWPPELGFYNKPAGKKQLGEIILKCYQTVGREKTVQCLDNLKELGFAEATKAGISIGIDDMIVPAEKTRIISKAYEMVNVVERQYRSGAITDGERYNKIVDIWTQATEEISGVIYKSLENNLGRPEYNPLFLMVDSGARGNRQQVRQLAGIRGLMAKPSGEIIERPIISNFREGLSVLEYFISTHGARKGLADTALKTADAGYLTRKLHDVAQDVVITMQDCGTNKGIIVQAIYEGDEEIVKLSERIYGRVCCDEIIDPMTGRIVVRPGELIDEKKAKEIEEAGAEKVKIRSVLTCESKWGVCASCYGLNLATNRMARLGESVGVIAAQSIGEPGTQLTMRTFHIGGTASQVFKQPQIRARNDGIVQYIDLRTVKTVDNHFIVLSKSGYLAVLDPSGRELERHTVIVGSIILIPDGEMVKKGQVFVQWDPYNVPILTEKGGIVEFRDIIEGVTVKKELDETTKQISTIVIEHKHDLHPQILILDENTREVIAFYGIPAGARIEVKPGDKVVAGQRIARTPRKMVQTKDITGGLPRVAELFEARKPKDSAEIAKIDGIVEDGGIIRGKRRILIRDPQTGSEEEHLIPLSKHLIVYKGDVVKKGQQLTEGPIVPQEILDVCGIQELQEYLLNEVQEVYRLQGVEINDKHIEIIIKQMLKKVKILDAGDTSFLWEEQVDRLKFEEENRIIEAKGGKPAVGIPVLLGITKASLDTDSFIAAASFQDTTRVLTEAATLGKVDPLKGFKENIIMGNLIPSGTGFRTYRNIRLVEVAPPEFKEEKKEQKIYGNGEEPAKEQKWIPQAGT.

Positions 73, 75, 88, and 91 each coordinate Zn(2+). Mg(2+) contacts are provided by Asp-464, Asp-466, and Asp-468. Residues Cys-810, Cys-884, Cys-891, and Cys-894 each coordinate Zn(2+). Residues 1365-1390 (EKKEQKIYGNGEEPAKEQKWIPQAGT) are disordered.

The protein belongs to the RNA polymerase beta' chain family. In terms of assembly, the RNAP catalytic core consists of 2 alpha, 1 beta, 1 beta' and 1 omega subunit. When a sigma factor is associated with the core the holoenzyme is formed, which can initiate transcription. Mg(2+) serves as cofactor. It depends on Zn(2+) as a cofactor.

The catalysed reaction is RNA(n) + a ribonucleoside 5'-triphosphate = RNA(n+1) + diphosphate. In terms of biological role, DNA-dependent RNA polymerase catalyzes the transcription of DNA into RNA using the four ribonucleoside triphosphates as substrates. This chain is DNA-directed RNA polymerase subunit beta', found in Methylacidiphilum infernorum (isolate V4) (Methylokorus infernorum (strain V4)).